A 507-amino-acid polypeptide reads, in one-letter code: Congo red hypersensitive protein 1 (507 aa).

Positions 1–22 (MKVLDLLTVLSASSLLSTFAAA) are cleaved as a signal peptide. The GH16 domain occupies 34-260 (ASSTASCNPL…KVIVTDYSTG (227 aa)). Cys40 and Cys48 are oxidised to a cystine. An N-linked (GlcNAc...) asparagine glycan is attached at Asn117. Residue Glu134 is the Nucleophile of the active site. Glu138 functions as the Proton donor in the catalytic mechanism. Glu138 provides a ligand contact to chitin. N-linked (GlcNAc...) asparagine glycans are attached at residues Asn177 and Asn201. Chitin-binding residues include Trp219 and Thr230. Disordered stretches follow at residues 329-368 (SSSASSTVSSSVSSTVSSSSSVSSSSSTSPSSSTATSSKT) and 381-478 (SSFE…TNSV). Low complexity-rich tracts occupy residues 381 to 439 (SSFE…PVQD) and 451 to 477 (TSSTTQISSKYTSTIQSSSSEASSTNS). Asn482 is lipidated: GPI-anchor amidated asparagine. Positions 483–507 (GADLAQSLPREGKLFSVLVALLALL) are cleaved as a propeptide — removed in mature form.

Belongs to the glycosyl hydrolase 16 family. CRH1 subfamily. In terms of processing, the GPI-anchor is attached to the protein in the endoplasmic reticulum and serves to target the protein to the cell surface. There, the glucosamine-inositol phospholipid moiety is cleaved off and the GPI-modified mannoprotein is covalently attached via its lipidless GPI glycan remnant to the 1,6-beta-glucan of the outer cell wall layer.

It is found in the secreted. The protein resides in the cell wall. Its subcellular location is the membrane. It catalyses the reaction Random endo-hydrolysis of N-acetyl-beta-D-glucosaminide (1-&gt;4)-beta-linkages in chitin and chitodextrins.. Dual chitinase/transglycosylase that plays a role in cell wall architecture. Chitinase and transglycosylase activities are coupled. Required for the polysaccharide cross-linking at the septa and the cell wall. More specifically, transfers chitin to both beta(1-3)- and beta(1-6)glucan in the cell wall. The minimal number of intact hexopyranose units required in the molecule of the acceptor oligosaccharide is two and the effectivity of the acceptor increased with the increasing length of its oligosaccharide chain. The sequence is that of Congo red hypersensitive protein 1 from Saccharomyces cerevisiae (strain ATCC 204508 / S288c) (Baker's yeast).